The chain runs to 513 residues: ATP synthase subunit alpha (513 aa).

169 to 176 (GDRQTGKT) is a binding site for ATP.

It belongs to the ATPase alpha/beta chains family. F-type ATPases have 2 components, CF(1) - the catalytic core - and CF(0) - the membrane proton channel. CF(1) has five subunits: alpha(3), beta(3), gamma(1), delta(1), epsilon(1). CF(0) has three main subunits: a(1), b(2) and c(9-12). The alpha and beta chains form an alternating ring which encloses part of the gamma chain. CF(1) is attached to CF(0) by a central stalk formed by the gamma and epsilon chains, while a peripheral stalk is formed by the delta and b chains.

The protein resides in the cell inner membrane. It carries out the reaction ATP + H2O + 4 H(+)(in) = ADP + phosphate + 5 H(+)(out). Functionally, produces ATP from ADP in the presence of a proton gradient across the membrane. The alpha chain is a regulatory subunit. The polypeptide is ATP synthase subunit alpha (Vibrio cholerae serotype O1 (strain ATCC 39541 / Classical Ogawa 395 / O395)).